Here is a 73-residue protein sequence, read N- to C-terminus: uncharacterized protein (73 aa).

This is an uncharacterized protein from Swinepox virus (strain Kasza) (SWPV).